The sequence spans 59 residues: Large ribosomal subunit protein bL32 (59 aa).

Belongs to the bacterial ribosomal protein bL32 family. Part of the 50S ribosomal subunit.

The chain is Large ribosomal subunit protein bL32 (rpmF) from Bacillus subtilis (strain 168).